The primary structure comprises 112 residues: MEPGRFRNRVKILTFTTSRDPSGQPVESWTGGNPVPAEVKGISGREQLSGGAETAQATIRVWMRFRSELNASSRLEVLSGPYKGQVLNIIGPPVANATGTRLEILCKTGAEK.

The protein belongs to the Caudoviricetes gp7/gp16 head completion protein family. In terms of assembly, interacts with the connector protein gp15. Interacts with the head-tail joining protein gp17.

It is found in the virion. Functionally, functions as a stopper that is part of the head-tail connector and that locks the viral DNA in the capsid. Following tail attachment to the entry receptor, seems to open by a diaphragm-like motion, allowing the genome to exit the capsid through the tail tube to the host cell. During assembly, functions as a docking platform which the preassembled tail tapered by the head-tail joining protein gp17 can bind to. The sequence is that of Head completion protein gp7 from Escherichia coli (Bacteriophage HK97).